A 978-amino-acid chain; its full sequence is Chaperone protein ClpB2, chloroplastic (978 aa).

Residues Met1 to Arg76 constitute a chloroplast transit peptide. One can recognise a Clp R domain in the interval Thr85–Lys229. Repeat regions lie at residues Phe89–Gln154 and Leu166–Lys229. The tract at residues Leu244 to Pro492 is i. Residues Gly289–Thr296 and Gly692–Thr699 contribute to the ATP site. The segment at Val618–Ser809 is II.

It belongs to the ClpA/ClpB family.

The protein localises to the plastid. Its subcellular location is the chloroplast. In terms of biological role, molecular chaperone that may play a role in chloroplast development. This Oryza sativa subsp. japonica (Rice) protein is Chaperone protein ClpB2, chloroplastic (CLPB2).